The sequence spans 284 residues: Pseudomurein endoisopeptidase PeiW (284 aa).

4 pseudomurein-binding repeat regions span residues 4–31 (GLNE…YVTT), 34–65 (GYKV…YISI), 70–100 (NGKI…NIIY), and 106–137 (SDHV…YISI). Active-site residues include C198, H233, and D250.

It belongs to the Psimunavirus Pseudomurein endoisopeptidase family. In terms of assembly, monomer. The cofactor is Ca(2+). It depends on Mg(2+) as a cofactor.

Cysteine protease that cleaves the cell wall of its host methanogen under hydrogen limitation of the latter (autolysis). Cleaves the epsilon-Ala-Lys isopeptide bond in the oligopeptides of pseudomurein. This chain is Pseudomurein endoisopeptidase PeiW (peiW), found in Methanothermobacter phage psiM100.